The primary structure comprises 505 residues: Lysine--tRNA ligase (505 aa).

2 residues coordinate Mg(2+): Glu-415 and Glu-422.

It belongs to the class-II aminoacyl-tRNA synthetase family. Homodimer. Mg(2+) is required as a cofactor.

It is found in the cytoplasm. It carries out the reaction tRNA(Lys) + L-lysine + ATP = L-lysyl-tRNA(Lys) + AMP + diphosphate. This chain is Lysine--tRNA ligase, found in Pectobacterium carotovorum subsp. carotovorum (strain PC1).